We begin with the raw amino-acid sequence, 123 residues long: Small ribosomal subunit protein bS6 (123 aa).

The tract at residues M102–E123 is disordered. The span at K104–E123 shows a compositional bias: basic and acidic residues.

It belongs to the bacterial ribosomal protein bS6 family.

In terms of biological role, binds together with bS18 to 16S ribosomal RNA. In Vibrio vulnificus (strain CMCP6), this protein is Small ribosomal subunit protein bS6.